We begin with the raw amino-acid sequence, 234 residues long: Small ribosomal subunit protein uS2 (234 aa).

It belongs to the universal ribosomal protein uS2 family.

This Clostridium kluyveri (strain NBRC 12016) protein is Small ribosomal subunit protein uS2.